We begin with the raw amino-acid sequence, 243 residues long: Urease accessory protein UreF (243 aa).

Belongs to the UreF family. As to quaternary structure, ureD, UreF and UreG form a complex that acts as a GTP-hydrolysis-dependent molecular chaperone, activating the urease apoprotein by helping to assemble the nickel containing metallocenter of UreC. The UreE protein probably delivers the nickel.

The protein localises to the cytoplasm. In terms of biological role, required for maturation of urease via the functional incorporation of the urease nickel metallocenter. This is Urease accessory protein UreF from Rhodopseudomonas palustris (strain BisB5).